The primary structure comprises 368 residues: 4-hydroxy-3-methylbut-2-en-1-yl diphosphate synthase (flavodoxin) (368 aa).

[4Fe-4S] cluster-binding residues include Cys-271, Cys-274, Cys-306, and Glu-313.

Belongs to the IspG family. Requires [4Fe-4S] cluster as cofactor.

It catalyses the reaction (2E)-4-hydroxy-3-methylbut-2-enyl diphosphate + oxidized [flavodoxin] + H2O + 2 H(+) = 2-C-methyl-D-erythritol 2,4-cyclic diphosphate + reduced [flavodoxin]. It participates in isoprenoid biosynthesis; isopentenyl diphosphate biosynthesis via DXP pathway; isopentenyl diphosphate from 1-deoxy-D-xylulose 5-phosphate: step 5/6. In terms of biological role, converts 2C-methyl-D-erythritol 2,4-cyclodiphosphate (ME-2,4cPP) into 1-hydroxy-2-methyl-2-(E)-butenyl 4-diphosphate. This is 4-hydroxy-3-methylbut-2-en-1-yl diphosphate synthase (flavodoxin) from Haemophilus influenzae (strain 86-028NP).